The chain runs to 214 residues: Pyridoxine/pyridoxamine 5'-phosphate oxidase (214 aa).

Residues 8–11 (RINY) and lysine 66 each bind substrate. Residues 61–66 (RILLIK), 76–77 (FT), arginine 82, lysine 83, and glutamine 105 each bind FMN. Substrate-binding residues include tyrosine 123, arginine 127, and serine 131. FMN is bound by residues 140 to 141 (QS) and tryptophan 184. Position 190-192 (190-192 (RLH)) interacts with substrate. Residue arginine 194 coordinates FMN.

It belongs to the pyridoxamine 5'-phosphate oxidase family. In terms of assembly, homodimer. It depends on FMN as a cofactor.

The enzyme catalyses pyridoxamine 5'-phosphate + O2 + H2O = pyridoxal 5'-phosphate + H2O2 + NH4(+). It catalyses the reaction pyridoxine 5'-phosphate + O2 = pyridoxal 5'-phosphate + H2O2. It participates in cofactor metabolism; pyridoxal 5'-phosphate salvage; pyridoxal 5'-phosphate from pyridoxamine 5'-phosphate: step 1/1. The protein operates within cofactor metabolism; pyridoxal 5'-phosphate salvage; pyridoxal 5'-phosphate from pyridoxine 5'-phosphate: step 1/1. Its function is as follows. Catalyzes the oxidation of either pyridoxine 5'-phosphate (PNP) or pyridoxamine 5'-phosphate (PMP) into pyridoxal 5'-phosphate (PLP). This is Pyridoxine/pyridoxamine 5'-phosphate oxidase from Burkholderia vietnamiensis (strain G4 / LMG 22486) (Burkholderia cepacia (strain R1808)).